Consider the following 287-residue polypeptide: Undecaprenyl-diphosphatase (287 aa).

The next 7 helical transmembrane spans lie at 6-26, 45-65, 89-109, 111-131, 204-224, 238-258, and 266-286; these read LHLL…FIPV, SGKV…MWIF, NLLL…KSIK, VFYH…IMLW, ATEF…VYDL, AIAV…RAVL, and YRVF…WIYA.

The protein belongs to the UppP family.

The protein localises to the cell inner membrane. The enzyme catalyses di-trans,octa-cis-undecaprenyl diphosphate + H2O = di-trans,octa-cis-undecaprenyl phosphate + phosphate + H(+). Catalyzes the dephosphorylation of undecaprenyl diphosphate (UPP). Confers resistance to bacitracin. The protein is Undecaprenyl-diphosphatase of Bordetella bronchiseptica (strain ATCC BAA-588 / NCTC 13252 / RB50) (Alcaligenes bronchisepticus).